The primary structure comprises 100 residues: Urease subunit gamma (100 aa).

The protein belongs to the urease gamma subunit family. Heterotrimer of UreA (gamma), UreB (beta) and UreC (alpha) subunits. Three heterotrimers associate to form the active enzyme.

It localises to the cytoplasm. It catalyses the reaction urea + 2 H2O + H(+) = hydrogencarbonate + 2 NH4(+). The protein operates within nitrogen metabolism; urea degradation; CO(2) and NH(3) from urea (urease route): step 1/1. In Nitrosococcus oceani (strain ATCC 19707 / BCRC 17464 / JCM 30415 / NCIMB 11848 / C-107), this protein is Urease subunit gamma.